The primary structure comprises 156 residues: 6,7-dimethyl-8-ribityllumazine synthase (156 aa).

Residues phenylalanine 25, alanine 59 to glutamate 61, and alanine 83 to isoleucine 85 contribute to the 5-amino-6-(D-ribitylamino)uracil site. Alanine 88–threonine 89 is a (2S)-2-hydroxy-3-oxobutyl phosphate binding site. The Proton donor role is filled by histidine 91. Residue phenylalanine 116 participates in 5-amino-6-(D-ribitylamino)uracil binding. (2S)-2-hydroxy-3-oxobutyl phosphate is bound at residue arginine 130.

The protein belongs to the DMRL synthase family.

The enzyme catalyses (2S)-2-hydroxy-3-oxobutyl phosphate + 5-amino-6-(D-ribitylamino)uracil = 6,7-dimethyl-8-(1-D-ribityl)lumazine + phosphate + 2 H2O + H(+). The protein operates within cofactor biosynthesis; riboflavin biosynthesis; riboflavin from 2-hydroxy-3-oxobutyl phosphate and 5-amino-6-(D-ribitylamino)uracil: step 1/2. Functionally, catalyzes the formation of 6,7-dimethyl-8-ribityllumazine by condensation of 5-amino-6-(D-ribitylamino)uracil with 3,4-dihydroxy-2-butanone 4-phosphate. This is the penultimate step in the biosynthesis of riboflavin. The sequence is that of 6,7-dimethyl-8-ribityllumazine synthase from Nitratidesulfovibrio vulgaris (strain ATCC 29579 / DSM 644 / CCUG 34227 / NCIMB 8303 / VKM B-1760 / Hildenborough) (Desulfovibrio vulgaris).